Here is a 278-residue protein sequence, read N- to C-terminus: Lipoyl-[GcvH]:protein N-lipoyltransferase (278 aa).

Positions Arg44–Val250 constitute a BPL/LPL catalytic domain. The active-site Acyl-thioester intermediate is the Cys149.

Belongs to the octanoyltransferase LipL family.

The catalysed reaction is N(6)-[(R)-lipoyl]-L-lysyl-[glycine-cleavage complex H protein] + L-lysyl-[lipoyl-carrier protein] = L-lysyl-[glycine-cleavage complex H protein] + N(6)-[(R)-lipoyl]-L-lysyl-[lipoyl-carrier protein]. Its pathway is protein modification; protein lipoylation via exogenous pathway. Its function is as follows. Catalyzes the amidotransfer (transamidation) of the lipoyl moiety from lipoyl-GcvH to the lipoyl domain of the E2 subunit of lipoate-dependent enzymes. Takes part in a pathway for scavenging of lipoic acid derived from eukaryotic host cells. Cannot use lipoyl-tripeptide (DK(L)A), lipoamide (LD), or free lipoate as substrate. This Listeria monocytogenes serovar 1/2a (strain ATCC BAA-679 / EGD-e) protein is Lipoyl-[GcvH]:protein N-lipoyltransferase.